The chain runs to 830 residues: Kinesin-like protein KIN-14B (830 aa).

Residues 56 to 97 (ENISDDNTESEAKVQKIQDELVSLNAQLKQITLQRREALNNY) adopt a coiled-coil conformation. In terms of domain architecture, Kinesin motor spans 103–425 (NIRVFCRIRP…LGFATRVRSI (323 aa)). 182 to 189 (GQTGSGKT) provides a ligand contact to ATP. Residues 434 to 476 (EMKARKETLLIDLGQKVNDLEHECEDIRRKIKNLEESMEHLTG) adopt a coiled-coil conformation.

This sequence belongs to the TRAFAC class myosin-kinesin ATPase superfamily. Kinesin family. KIN-14 subfamily.

The chain is Kinesin-like protein KIN-14B from Oryza sativa subsp. japonica (Rice).